Here is a 545-residue protein sequence, read N- to C-terminus: CTP synthase (545 aa).

An amidoligase domain region spans residues Met-1–Leu-266. Ser-14 contacts CTP. Position 14 (Ser-14) interacts with UTP. Residues Ser-15–Ile-20 and Asp-72 each bind ATP. Positions 72 and 140 each coordinate Mg(2+). CTP contacts are provided by residues Asp-147–Glu-149, Lys-187–Gln-192, and Lys-223. UTP is bound by residues Lys-187–Gln-192 and Lys-223. Position 239-241 (Lys-239–Val-241) interacts with ATP. The 252-residue stretch at Asn-291–Arg-542 folds into the Glutamine amidotransferase type-1 domain. Gly-352 provides a ligand contact to L-glutamine. The Nucleophile; for glutamine hydrolysis role is filled by Cys-379. L-glutamine-binding positions include Leu-380–Gln-383, Glu-403, and Arg-470. Catalysis depends on residues His-515 and Glu-517.

It belongs to the CTP synthase family. Homotetramer.

The enzyme catalyses UTP + L-glutamine + ATP + H2O = CTP + L-glutamate + ADP + phosphate + 2 H(+). It catalyses the reaction L-glutamine + H2O = L-glutamate + NH4(+). The catalysed reaction is UTP + NH4(+) + ATP = CTP + ADP + phosphate + 2 H(+). Its pathway is pyrimidine metabolism; CTP biosynthesis via de novo pathway; CTP from UDP: step 2/2. Allosterically activated by GTP, when glutamine is the substrate; GTP has no effect on the reaction when ammonia is the substrate. The allosteric effector GTP functions by stabilizing the protein conformation that binds the tetrahedral intermediate(s) formed during glutamine hydrolysis. Inhibited by the product CTP, via allosteric rather than competitive inhibition. Its function is as follows. Catalyzes the ATP-dependent amination of UTP to CTP with either L-glutamine or ammonia as the source of nitrogen. Regulates intracellular CTP levels through interactions with the four ribonucleotide triphosphates. The polypeptide is CTP synthase (Erwinia tasmaniensis (strain DSM 17950 / CFBP 7177 / CIP 109463 / NCPPB 4357 / Et1/99)).